Here is a 353-residue protein sequence, read N- to C-terminus: sn-glycerol-3-phosphate import ATP-binding protein UgpC 3 (353 aa).

In terms of domain architecture, ABC transporter spans I4–I235. G37 to S44 provides a ligand contact to ATP.

This sequence belongs to the ABC transporter superfamily. sn-glycerol-3-phosphate importer (TC 3.A.1.1.3) family. In terms of assembly, the complex is composed of two ATP-binding proteins (UgpC), two transmembrane proteins (UgpA and UgpE) and a solute-binding protein (UgpB).

Its subcellular location is the cell inner membrane. It catalyses the reaction sn-glycerol 3-phosphate(out) + ATP + H2O = sn-glycerol 3-phosphate(in) + ADP + phosphate + H(+). Functionally, part of the ABC transporter complex UgpBAEC involved in sn-glycerol-3-phosphate (G3P) import. Responsible for energy coupling to the transport system. This Agrobacterium fabrum (strain C58 / ATCC 33970) (Agrobacterium tumefaciens (strain C58)) protein is sn-glycerol-3-phosphate import ATP-binding protein UgpC 3.